The chain runs to 332 residues: Ribosomal RNA small subunit methyltransferase H (332 aa).

Residues 34–36, D59, F86, D112, and Q119 each bind S-adenosyl-L-methionine; that span reads GGH.

The protein belongs to the methyltransferase superfamily. RsmH family.

It is found in the cytoplasm. It catalyses the reaction cytidine(1402) in 16S rRNA + S-adenosyl-L-methionine = N(4)-methylcytidine(1402) in 16S rRNA + S-adenosyl-L-homocysteine + H(+). Functionally, specifically methylates the N4 position of cytidine in position 1402 (C1402) of 16S rRNA. This chain is Ribosomal RNA small subunit methyltransferase H, found in Chlorobium phaeobacteroides (strain BS1).